Reading from the N-terminus, the 329-residue chain is Phosphoenolpyruvate transferase (329 aa).

Position 61 (Asp-61) interacts with 7,8-didemethyl-8-hydroxy-5-deazariboflavin.

It belongs to the CofD family. In terms of assembly, homodimer. It depends on Mg(2+) as a cofactor.

The catalysed reaction is enolpyruvoyl-2-diphospho-5'-guanosine + 7,8-didemethyl-8-hydroxy-5-deazariboflavin = dehydro coenzyme F420-0 + GMP + H(+). It participates in cofactor biosynthesis; coenzyme F420 biosynthesis. Its function is as follows. Catalyzes the transfer of the phosphoenolpyruvate moiety from enoylpyruvoyl-2-diphospho-5'-guanosine (EPPG) to 7,8-didemethyl-8-hydroxy-5-deazariboflavin (FO) with the formation of dehydro coenzyme F420-0 and GMP. The chain is Phosphoenolpyruvate transferase from Mycobacterium marinum (strain ATCC BAA-535 / M).